The primary structure comprises 548 residues: MTKYVFVTGGVVSSLGKGIAAASLAAILESRGLQVTLLKLDPYINVDPGTMSPFQHGEVFVTEDGAETDLDLGHYERFISAKMHKVNNFTTGQIYESVLRKERRGDYLGKTVQVIPHITNEIQDFIARGADAAWNGATDVAIVEIGGTVGDIESLPFLEAARQMSLRLGRNNAAFVHLTLVPFIASAGELKTKPTQHSVQKLREIGIYPNLLLCRADRPIPDDERAKISMFSNVPLDAVISVWDADSIYKIPAMLHKQGVDNIVCEALGLTPPPADLSMWDNLVDALEHPTHQLTIGMVGKYVDLTESYKSLSEALVHAGIHTRSKINIEYIDSEDIETRGTDQLKHLDAILVPGGFGKRGTEGKIAAIRYARENGVPYLGICLGMQLAVIEFARHVAGLGGANSTEFDPSAPHPVVALITEWMDREGKVEKRDATSDLGGTMRKGAQRCPVKPGTRAQAIYGDDVNERHRHRYEVNNVYVPRLEEAGMVISARTPTENLPEMMELPDHPWFVGVQFHPEFTSTPRDGHPLFSSFIEAAIANHARKEA.

Positions 1-270 (MTKYVFVTGG…DNIVCEALGL (270 aa)) are amidoligase domain. CTP is bound at residue Ser13. UTP is bound at residue Ser13. Residues 14–19 (SLGKGI) and Asp71 each bind ATP. 2 residues coordinate Mg(2+): Asp71 and Glu144. CTP is bound by residues 151-153 (DIE), 191-196 (KTKPTQ), and Lys227. Residues 191-196 (KTKPTQ) and Lys227 each bind UTP. Positions 295 to 545 (TIGMVGKYVD…IEAAIANHAR (251 aa)) constitute a Glutamine amidotransferase type-1 domain. Residue Gly356 participates in L-glutamine binding. Cys383 acts as the Nucleophile; for glutamine hydrolysis in catalysis. L-glutamine-binding positions include 384-387 (LGMQ), Glu407, and Arg473. Residues His518 and Glu520 contribute to the active site.

It belongs to the CTP synthase family. As to quaternary structure, homotetramer.

It catalyses the reaction UTP + L-glutamine + ATP + H2O = CTP + L-glutamate + ADP + phosphate + 2 H(+). The catalysed reaction is L-glutamine + H2O = L-glutamate + NH4(+). It carries out the reaction UTP + NH4(+) + ATP = CTP + ADP + phosphate + 2 H(+). The protein operates within pyrimidine metabolism; CTP biosynthesis via de novo pathway; CTP from UDP: step 2/2. With respect to regulation, allosterically activated by GTP, when glutamine is the substrate; GTP has no effect on the reaction when ammonia is the substrate. The allosteric effector GTP functions by stabilizing the protein conformation that binds the tetrahedral intermediate(s) formed during glutamine hydrolysis. Inhibited by the product CTP, via allosteric rather than competitive inhibition. In terms of biological role, catalyzes the ATP-dependent amination of UTP to CTP with either L-glutamine or ammonia as the source of nitrogen. Regulates intracellular CTP levels through interactions with the four ribonucleotide triphosphates. The sequence is that of CTP synthase from Bordetella petrii (strain ATCC BAA-461 / DSM 12804 / CCUG 43448).